Reading from the N-terminus, the 210-residue chain is Vacuolar protein sorting-associated protein 28 homolog (210 aa).

In terms of domain architecture, VPS28 N-terminal spans 1 to 106; that stretch reads MSSQNANLMR…REGRPITVKD (106 aa). One can recognise a VPS28 C-terminal domain in the interval 110–206; that stretch reads NVLKHIASIV…AYQAFNKALN (97 aa).

This sequence belongs to the VPS28 family. Component of the ESCRT-I complex (endosomal sorting complex required for transport I). Expressed in embryos.

It localises to the endosome. Its function is as follows. Component of the ESCRT-I complex, a regulator of vesicular trafficking process. The polypeptide is Vacuolar protein sorting-associated protein 28 homolog (vps-28) (Caenorhabditis elegans).